The primary structure comprises 598 residues: MSESNKAIRQPIISVLGHVDHGKTTLLDKIRGTAVAAKEAGGITQHIGASEIPLEVVKEICGPLLEQLDVEITIPGLLFIDTPGHEAFTNLRRRGGALADIAILVIDIMEGVMPQTEEALRILRRYRTPFVVAANKVDRVPGWKSHEDTPFLESFQKQSPEVQQRLEEKVYELIGQLHQHGFQAERFDRVRDFTRTVAIVPTSGVTGEGIPELLMVVTGLAQRFLEEQLKIEVEGPGKAAILEVKEEPGLGHTVDAILYDGIIRTGDTIVIGHPEEPIVTRVRSLLKPKPLDEMRDPSDRFRKVDEVTAAAGVKISAPELEEAVAGAPLRVVGEDEDVEEVVREVQEEVEEVTIETDQEGIIIKADTLGTLEAVVGEFKEKDVPIRKADVGDITKKDVIEAHAVAEKDPLLGVIVGFNVGVTEEARELADEYDVDIIIDDVIYELVEKYEEMVEKRIERERRKRLDELVRPGKIKVLPGYIFRQSKPAIVGVQVLAGVIKPGYPLMREDGRELGEIKQIQMHGEPIKEAKKGQEVAISIEGPIVGRHFEEGDILYTDVPSEHAKLMFEEFKDLLTEDELEALKEIAEIKRKEDPFYGM.

One can recognise a tr-type G domain in the interval 8-226 (IRQPIISVLG…VTGLAQRFLE (219 aa)). Positions 17–24 (GHVDHGKT) are G1. 17–24 (GHVDHGKT) contributes to the GTP binding site. The interval 42–46 (GITQH) is G2. The tract at residues 81–84 (DTPG) is G3. GTP-binding positions include 81 to 85 (DTPGH) and 135 to 138 (NKVD). Residues 135–138 (NKVD) form a G4 region. Residues 203–205 (SGV) are G5.

This sequence belongs to the TRAFAC class translation factor GTPase superfamily. Classic translation factor GTPase family. IF-2 subfamily.

Function in general translation initiation by promoting the binding of the formylmethionine-tRNA to ribosomes. Seems to function along with eIF-2. This chain is Probable translation initiation factor IF-2, found in Methanopyrus kandleri (strain AV19 / DSM 6324 / JCM 9639 / NBRC 100938).